The sequence spans 234 residues: MNDNNVIFDQRSDGLNAFFSKIYALMGAGVLVSALVSWIMITFFLDNMTAILQSGSLFFLVLWIIPLVMVVSLQGLAMKNSKMALPIFIGYAAFMGFLISFTLLMYTATDITLAFVTAAAMFFGLSVYGRFTKRNLSAMGKAFGVAVWGLIIAMFLNFFFASTGLTILISLVGVVIFAGLIAWDNQKITQVYNANNGQVSDGWAISMALSLYLDFINMFLFLLRLFGIAGGNRD.

7 helical membrane-spanning segments follow: residues 25 to 45 (LMGAGVLVSALVSWIMITFFL), 57 to 77 (LFFLVLWIIPLVMVVSLQGLA), 85 to 105 (LPIFIGYAAFMGFLISFTLLM), 108 to 128 (ATDITLAFVTAAAMFFGLSVY), 142 to 162 (AFGVAVWGLIIAMFLNFFFAS), 163 to 183 (TGLTILISLVGVVIFAGLIAW), and 203 to 223 (WAISMALSLYLDFINMFLFLL).

The protein belongs to the BI1 family.

It localises to the cell membrane. This is an uncharacterized protein from Lactococcus lactis subsp. lactis (strain IL1403) (Streptococcus lactis).